A 163-amino-acid polypeptide reads, in one-letter code: Early nodulin-like protein 20 (163 aa).

A signal peptide spans 1–25; the sequence is MMGKYLWALVYVTVMILIIVVEVES. The Phytocyanin domain occupies 26 to 126; sequence SLHRVGGGRY…GMKLAITVLP (101 aa). N-linked (GlcNAc...) asparagine glycans are attached at residues N42, N63, N73, N88, and N135. Cysteines 80 and 114 form a disulfide. Residue S138 is the site of GPI-anchor amidated serine attachment. A propeptide spans 139–163 (removed in mature form); it reads TTTPLIPPNAITAAILIFAFKALLL.

The protein belongs to the early nodulin-like (ENODL) family.

The protein localises to the cell membrane. May act as a carbohydrate transporter. This Arabidopsis thaliana (Mouse-ear cress) protein is Early nodulin-like protein 20.